The sequence spans 67 residues: Large ribosomal subunit protein uL29 (67 aa).

The protein belongs to the universal ribosomal protein uL29 family.

The polypeptide is Large ribosomal subunit protein uL29 (Rubrobacter xylanophilus (strain DSM 9941 / JCM 11954 / NBRC 16129 / PRD-1)).